Consider the following 264-residue polypeptide: tRNA pseudouridine synthase A (264 aa).

The active-site Nucleophile is Asp-52. Tyr-110 provides a ligand contact to substrate.

It belongs to the tRNA pseudouridine synthase TruA family. Homodimer.

The enzyme catalyses uridine(38/39/40) in tRNA = pseudouridine(38/39/40) in tRNA. In terms of biological role, formation of pseudouridine at positions 38, 39 and 40 in the anticodon stem and loop of transfer RNAs. This chain is tRNA pseudouridine synthase A, found in Wigglesworthia glossinidia brevipalpis.